Here is a 346-residue protein sequence, read N- to C-terminus: D-alanine--D-alanine ligase A (346 aa).

In terms of domain architecture, ATP-grasp spans Lys138–Arg332. Gln164–Thr217 serves as a coordination point for ATP. Residues Asp286, Glu299, and Asn301 each contribute to the Mg(2+) site.

The protein belongs to the D-alanine--D-alanine ligase family. The cofactor is Mg(2+). Mn(2+) serves as cofactor.

It is found in the cytoplasm. The catalysed reaction is 2 D-alanine + ATP = D-alanyl-D-alanine + ADP + phosphate + H(+). It participates in cell wall biogenesis; peptidoglycan biosynthesis. Its function is as follows. Cell wall formation. The sequence is that of D-alanine--D-alanine ligase A from Pseudomonas aeruginosa (strain ATCC 15692 / DSM 22644 / CIP 104116 / JCM 14847 / LMG 12228 / 1C / PRS 101 / PAO1).